An 85-amino-acid polypeptide reads, in one-letter code: Acyl carrier protein (85 aa).

The Carrier domain maps to Asp4–Leu79. Position 39 is an O-(pantetheine 4'-phosphoryl)serine (Ser39).

This sequence belongs to the acyl carrier protein (ACP) family. Post-translationally, 4'-phosphopantetheine is transferred from CoA to a specific serine of apo-ACP by AcpS. This modification is essential for activity because fatty acids are bound in thioester linkage to the sulfhydryl of the prosthetic group.

It is found in the cytoplasm. The protein operates within lipid metabolism; fatty acid biosynthesis. In terms of biological role, carrier of the growing fatty acid chain in fatty acid biosynthesis. In Petrotoga mobilis (strain DSM 10674 / SJ95), this protein is Acyl carrier protein.